A 293-amino-acid chain; its full sequence is Pantothenate synthetase (293 aa).

Residue 30–37 (MGYLHKGH) coordinates ATP. His-37 acts as the Proton donor in catalysis. Residue Gln-61 participates in (R)-pantoate binding. A beta-alanine-binding site is contributed by Gln-61. 147-150 (GEKD) lines the ATP pocket. A (R)-pantoate-binding site is contributed by Gln-153. Residues Val-176 and 184-187 (CSSR) contribute to the ATP site.

Belongs to the pantothenate synthetase family. As to quaternary structure, homodimer.

It localises to the cytoplasm. It catalyses the reaction (R)-pantoate + beta-alanine + ATP = (R)-pantothenate + AMP + diphosphate + H(+). The protein operates within cofactor biosynthesis; (R)-pantothenate biosynthesis; (R)-pantothenate from (R)-pantoate and beta-alanine: step 1/1. Catalyzes the condensation of pantoate with beta-alanine in an ATP-dependent reaction via a pantoyl-adenylate intermediate. This Brucella melitensis biotype 2 (strain ATCC 23457) protein is Pantothenate synthetase.